Here is a 282-residue protein sequence, read N- to C-terminus: tRNA pseudouridine synthase A (282 aa).

The Nucleophile role is filled by D51. Y109 provides a ligand contact to substrate.

It belongs to the tRNA pseudouridine synthase TruA family. Homodimer.

It catalyses the reaction uridine(38/39/40) in tRNA = pseudouridine(38/39/40) in tRNA. Formation of pseudouridine at positions 38, 39 and 40 in the anticodon stem and loop of transfer RNAs. This Delftia acidovorans (strain DSM 14801 / SPH-1) protein is tRNA pseudouridine synthase A.